Reading from the N-terminus, the 974-residue chain is Apical junction component 1 homolog (974 aa).

Disordered stretches follow at residues proline 23–proline 137, alanine 201–valine 233, and cysteine 306–tyrosine 326. Serine 52 bears the Phosphoserine mark. A compositionally biased stretch (pro residues) spans glutamate 69–arginine 79. A compositionally biased stretch (basic and acidic residues) spans arginine 116–proline 134. At serine 129 the chain carries Phosphoserine. The segment covering alanine 201 to alanine 216 has biased composition (polar residues). Position 322 is an omega-N-methylarginine (arginine 322). A phosphoserine mark is found at serine 468, serine 509, and serine 512. Positions aspartate 539–serine 576 are disordered. A Phosphoserine modification is found at serine 593. Positions alanine 618 to aspartate 661 are disordered. Positions alanine 623 to alanine 636 are enriched in low complexity. Arginine 749 bears the Asymmetric dimethylarginine; alternate mark. Residue arginine 749 is modified to Omega-N-methylarginine; alternate.

The protein localises to the apical cell membrane. Its subcellular location is the cell projection. It localises to the cilium. The protein resides in the cell junction. It is found in the adherens junction. Its function is as follows. May be involved in the control of adherens junction integrity. This is Apical junction component 1 homolog (Ajm1) from Mus musculus (Mouse).